A 671-amino-acid polypeptide reads, in one-letter code: Nucleolar GTP-binding protein 1 (671 aa).

The 182-residue stretch at 169–350 (RTVLICGYPN…VKNAACERLL (182 aa)) folds into the OBG-type G domain. Residues 175 to 182 (GYPNVGKS), 221 to 225 (DTPGI), and 289 to 292 (NKTD) each bind GTP. A disordered region spans residues 516–671 (VAQNRSTVPR…KRGKGKTDRR (156 aa)). The segment covering 595 to 605 (RAMSISRSQSR) has biased composition (polar residues). 2 stretches are compositionally biased toward basic residues: residues 631-640 (NKSHKKRDKN) and 654-671 (RPKH…TDRR).

This sequence belongs to the TRAFAC class OBG-HflX-like GTPase superfamily. OBG GTPase family. NOG subfamily.

Its subcellular location is the nucleus. It is found in the nucleolus. Functionally, involved in the biogenesis of the 60S ribosomal subunit. The protein is Nucleolar GTP-binding protein 1 of Arabidopsis thaliana (Mouse-ear cress).